The chain runs to 71 residues: Pre-hexon-linking protein VIII (71 aa).

It belongs to the adenoviridae hexon-linking protein family. Interacts with the peripentonal hexons as well as the hexons in the facets. Part of a complex composed of the core-capsid bridging protein, the endosome lysis protein VI and the hexon-linking protein VIII; these interactions bridge the virus core to the capsid. Post-translationally, cleaved by the viral protease during virion maturation. May cause the middle segment to be shed from the capsid.

It is found in the host nucleus. The protein localises to the virion. In terms of biological role, structural component of the virion that acts as a cement protein on the capsid interior and which glue the peripentonal hexons and group-of-nine hexons together. In Canine adenovirus serotype 1 (strain Glaxo) (CAdV-1), this protein is Pre-hexon-linking protein VIII.